Consider the following 231-residue polypeptide: Vacuolar protein sorting-associated protein 24 (231 aa).

Positions 184–195 (KAADAATHREQS) are enriched in basic and acidic residues. The interval 184-214 (KAADAATHREQSLKQALPSLSNGIAKDSTEI) is disordered.

This sequence belongs to the SNF7 family. As to quaternary structure, component of the endosomal sorting required for transport complex III (ESCRT-III).

It is found in the endosome membrane. It localises to the endomembrane system. Its function is as follows. Class E VPS protein implicated in concentration and sorting of cargo proteins of the multivesicular body (MVB) for incorporation into intralumenal vesicles. The lumenal sequestrated membrane proteins will be targeted into the vacuole after fusion of the endosome with the vacuole. The sequence is that of Vacuolar protein sorting-associated protein 24 (vps24) from Schizosaccharomyces pombe (strain 972 / ATCC 24843) (Fission yeast).